Here is a 67-residue protein sequence, read N- to C-terminus: Ayadualin (67 aa).

An N-terminal signal peptide occupies residues Met1–Ala20. Acidic residues predominate over residues Pro35–Glu54. The interval Pro35–Cys67 is disordered. An Integrin-binding motif motif is present at residues Arg64 to Asp66.

As to expression, salivary gland.

It is found in the secreted. Inhibits collagen- and ADP-induced host platelet aggregation by blocking the binding of host integrin alpha-IIb/beta-3 (ITGA2B/ITGB3) to fibrinogen. Inhibits the intrinsic blood coagulation pathway in the host by blocking the activity of host coagulation factor XIIa (F12). This is Ayadualin from Lutzomyia ayacuchensis (Sand fly).